The primary structure comprises 411 residues: Glycogen synthase kinase-3 homolog MsK-3 (411 aa).

The 285-residue stretch at 74-358 (YMAERVVGHG…ALEALVHPFY (285 aa)) folds into the Protein kinase domain. ATP-binding positions include 80 to 88 (VGHGSFGVV) and Lys-103. The active-site Proton acceptor is Asp-199. Phosphotyrosine is present on Tyr-234.

It belongs to the protein kinase superfamily. CMGC Ser/Thr protein kinase family. GSK-3 subfamily. Absent in leaves and petioles, very low levels are seen in the stems and roots while a moderate expression is seen in the nodes.

It catalyses the reaction L-seryl-[protein] + ATP = O-phospho-L-seryl-[protein] + ADP + H(+). It carries out the reaction L-threonyl-[protein] + ATP = O-phospho-L-threonyl-[protein] + ADP + H(+). The chain is Glycogen synthase kinase-3 homolog MsK-3 (MSK-3) from Medicago sativa (Alfalfa).